A 361-amino-acid polypeptide reads, in one-letter code: Ankyrin repeat domain-containing protein 16 (361 aa).

ANK repeat units lie at residues Ala36–Ala66, Asp70–Cys99, Ala103–Leu132, Asp136–Lys165, Ile170–Tyr200, Cys204–Ala234, Leu238–Val268, Thr273–Ser302, and Lys306–Glu335.

As to quaternary structure, interacts with AARS; the interaction is direct.

It is found in the cytoplasm. It localises to the nucleus. Required to prevent the misactivation of serine (Ser) with tRNA(Ala) by promoting the hydrolysis of Ser-mischarged tRNA(Ala), thereby playing a role in translational fidelity. Binds directly to the catalytic domain of AARS/AlaRS and captures Ser that is misactivated by AARS/AlaRS, preventing the charging of Ser adenylates to tRNA(Ala) and precluding Ser misincorporation in nascent peptides. The sequence is that of Ankyrin repeat domain-containing protein 16 from Homo sapiens (Human).